The primary structure comprises 489 residues: Argininosuccinate lyase (489 aa).

A disordered region spans residues 462–489; the sequence is QARYQQTEPAEEPPLPPSSPGSGLPLES.

The protein belongs to the lyase 1 family. Argininosuccinate lyase subfamily.

It is found in the cytoplasm. It catalyses the reaction 2-(N(omega)-L-arginino)succinate = fumarate + L-arginine. The protein operates within amino-acid biosynthesis; L-arginine biosynthesis; L-arginine from L-ornithine and carbamoyl phosphate: step 3/3. This Synechococcus sp. (strain JA-3-3Ab) (Cyanobacteria bacterium Yellowstone A-Prime) protein is Argininosuccinate lyase.